We begin with the raw amino-acid sequence, 570 residues long: PTS system lactose-specific EIICB component (570 aa).

Residues 9 to 410 (IEKGKPFFEK…VVDIIIYYPF (402 aa)) enclose the PTS EIIC type-3 domain. A run of 9 helical transmembrane segments spans residues 31-51 (GFIS…IAYV), 65-85 (AILM…VAGT), 104-124 (INFI…ASDP), 133-153 (AFMG…TVIV), 178-198 (FKDL…DLVI), 223-243 (GWIG…VGIH), 283-303 (MFIV…MFMW), 340-360 (VFFI…KLFV), and 382-402 (IIMG…LIVV). A PTS EIIB type-3 domain is found at 467–570 (QTNVLVLCAG…LDFVQQQFEN (104 aa)). The Phosphocysteine intermediate; for EIIB activity role is filled by C474. C474 bears the Phosphocysteine; by EIIA mark.

It is found in the cell membrane. It catalyses the reaction lactose(out) + N(pros)-phospho-L-histidyl-[protein] = lactose 6-phosphate(in) + L-histidyl-[protein]. Its function is as follows. The phosphoenolpyruvate-dependent sugar phosphotransferase system (sugar PTS), a major carbohydrate active transport system, catalyzes the phosphorylation of incoming sugar substrates concomitantly with their translocation across the cell membrane. The enzyme II LacEF PTS system is involved in lactose transport, but can also use galactose, isopropyl beta-thio-galactopyranoside and thiomethyl beta-D-galactopyranoside (TMG) as substrates. The polypeptide is PTS system lactose-specific EIICB component (Staphylococcus aureus).